The chain runs to 187 residues: Elongation factor P (187 aa).

It belongs to the elongation factor P family.

The protein localises to the cytoplasm. It participates in protein biosynthesis; polypeptide chain elongation. Its function is as follows. Involved in peptide bond synthesis. Stimulates efficient translation and peptide-bond synthesis on native or reconstituted 70S ribosomes in vitro. Probably functions indirectly by altering the affinity of the ribosome for aminoacyl-tRNA, thus increasing their reactivity as acceptors for peptidyl transferase. The chain is Elongation factor P from Roseiflexus sp. (strain RS-1).